The following is a 35-amino-acid chain: Photosystem II reaction center protein M (35 aa).

Residues 7-27 (GLLATILVILVPSIFLVILYV) traverse the membrane as a helical segment.

It belongs to the PsbM family. PSII is composed of 1 copy each of membrane proteins PsbA, PsbB, PsbC, PsbD, PsbE, PsbF, PsbH, PsbI, PsbJ, PsbK, PsbL, PsbM, PsbT, PsbX, PsbY, PsbZ, Psb30/Ycf12, peripheral proteins PsbO, CyanoQ (PsbQ), PsbU, PsbV and a large number of cofactors. It forms dimeric complexes.

Its subcellular location is the cellular thylakoid membrane. In terms of biological role, one of the components of the core complex of photosystem II (PSII). PSII is a light-driven water:plastoquinone oxidoreductase that uses light energy to abstract electrons from H(2)O, generating O(2) and a proton gradient subsequently used for ATP formation. It consists of a core antenna complex that captures photons, and an electron transfer chain that converts photonic excitation into a charge separation. This subunit is found at the monomer-monomer interface. In Synechococcus sp. (strain JA-3-3Ab) (Cyanobacteria bacterium Yellowstone A-Prime), this protein is Photosystem II reaction center protein M.